A 632-amino-acid chain; its full sequence is Threonine--tRNA ligase (632 aa).

A TGS domain is found at 1-61; that stretch reads MPIVTLPDGS…EHDAEVSILT (61 aa). Residues 242–533 are catalytic; the sequence is DHRKLARKLD…LIEHYAGSMP (292 aa). Residues C333, H384, and H510 each contribute to the Zn(2+) site.

This sequence belongs to the class-II aminoacyl-tRNA synthetase family. In terms of assembly, homodimer. The cofactor is Zn(2+).

Its subcellular location is the cytoplasm. The catalysed reaction is tRNA(Thr) + L-threonine + ATP = L-threonyl-tRNA(Thr) + AMP + diphosphate + H(+). Its function is as follows. Catalyzes the attachment of threonine to tRNA(Thr) in a two-step reaction: L-threonine is first activated by ATP to form Thr-AMP and then transferred to the acceptor end of tRNA(Thr). Also edits incorrectly charged L-seryl-tRNA(Thr). The polypeptide is Threonine--tRNA ligase (Chromohalobacter salexigens (strain ATCC BAA-138 / DSM 3043 / CIP 106854 / NCIMB 13768 / 1H11)).